The chain runs to 94 residues: uncharacterized protein (94 aa).

The first 26 residues, methionine 1–alanine 26, serve as a signal peptide directing secretion. 2 helical membrane-spanning segments follow: residues leucine 42–tryptophan 62 and phenylalanine 71–leucine 91.

The protein resides in the cell membrane. This is an uncharacterized protein from Mycobacterium tuberculosis (strain CDC 1551 / Oshkosh).